A 125-amino-acid chain; its full sequence is Large ribosomal subunit protein bL12 (125 aa).

It belongs to the bacterial ribosomal protein bL12 family. Homodimer. Part of the ribosomal stalk of the 50S ribosomal subunit. Forms a multimeric L10(L12)X complex, where L10 forms an elongated spine to which 2 to 4 L12 dimers bind in a sequential fashion. Binds GTP-bound translation factors.

Its function is as follows. Forms part of the ribosomal stalk which helps the ribosome interact with GTP-bound translation factors. Is thus essential for accurate translation. The chain is Large ribosomal subunit protein bL12 from Bradyrhizobium sp. (strain ORS 278).